Reading from the N-terminus, the 445-residue chain is Vacuolar fusion protein CCZ1 homolog (445 aa).

It belongs to the CCZ1 family.

The protein is Vacuolar fusion protein CCZ1 homolog of Dictyostelium discoideum (Social amoeba).